The chain runs to 122 residues: MRHYEIVFIVHPDQSEQVPAMIERYKSTVTSQGGQVHRVEDWGRRQLAYMIQKLAKAHYVCVNIECGKETLAELEHAFKFNDAVLRHLIVQTKKAETAPSPMMKEVQREEAKKAAAQSEQAA.

Positions 95 to 122 are disordered; it reads AETAPSPMMKEVQREEAKKAAAQSEQAA.

It belongs to the bacterial ribosomal protein bS6 family.

Functionally, binds together with bS18 to 16S ribosomal RNA. The polypeptide is Small ribosomal subunit protein bS6 (Ralstonia nicotianae (strain ATCC BAA-1114 / GMI1000) (Ralstonia solanacearum)).